A 312-amino-acid polypeptide reads, in one-letter code: Malate dehydrogenase (312 aa).

NAD(+) is bound by residues 12–17 and Asp36; that span reads GAGFTG. Residues Arg87 and Arg93 each contribute to the substrate site. Residues Asn100 and 123–125 contribute to the NAD(+) site; that span reads LTN. Asn125 lines the substrate pocket. Ser149 bears the Phosphoserine mark. Position 156 (Arg156) interacts with substrate. The active-site Proton acceptor is the His180.

The protein belongs to the LDH/MDH superfamily. MDH type 3 family.

It carries out the reaction (S)-malate + NAD(+) = oxaloacetate + NADH + H(+). Catalyzes the reversible oxidation of malate to oxaloacetate. This Anoxybacillus flavithermus (strain DSM 21510 / WK1) protein is Malate dehydrogenase.